Consider the following 353-residue polypeptide: Mannonate dehydratase (353 aa).

The protein belongs to the mannonate dehydratase family. The cofactor is Fe(2+). Mn(2+) is required as a cofactor.

The catalysed reaction is D-mannonate = 2-dehydro-3-deoxy-D-gluconate + H2O. The protein operates within carbohydrate metabolism; pentose and glucuronate interconversion. In terms of biological role, catalyzes the dehydration of D-mannonate. The chain is Mannonate dehydratase from Burkholderia cenocepacia (strain ATCC BAA-245 / DSM 16553 / LMG 16656 / NCTC 13227 / J2315 / CF5610) (Burkholderia cepacia (strain J2315)).